The sequence spans 166 residues: Nascent polypeptide-associated complex subunit beta (166 aa).

Disordered regions lie at residues 1 to 40 (MVLNQEKLAKLQAASRTGGKGTPRRKMAPKPKGPGGEDPK) and 129 to 166 (HAASQAAAAGTKDDDDVPDVVENFDEADKKETEVDKLD). One can recognise an NAC-A/B domain in the interval 35–100 (GGEDPKLQAA…GVDKELTELV (66 aa)). A compositionally biased stretch (acidic residues) spans 141 to 153 (DDDDVPDVVENFD). Residues 154 to 166 (EADKKETEVDKLD) show a composition bias toward basic and acidic residues.

The protein belongs to the NAC-beta family. Part of the nascent polypeptide-associated complex (NAC), consisting of EGD2 and EGD1. NAC associates with ribosomes via EGD1.

The protein localises to the cytoplasm. It is found in the nucleus. Its function is as follows. Component of the nascent polypeptide-associated complex (NAC), a dynamic component of the ribosomal exit tunnel, protecting the emerging polypeptides from interaction with other cytoplasmic proteins to ensure appropriate nascent protein targeting. The NAC complex also promotes mitochondrial protein import by enhancing productive ribosome interactions with the outer mitochondrial membrane and blocks the inappropriate interaction of ribosomes translating non-secretory nascent polypeptides with translocation sites in the membrane of the endoplasmic reticulum. EGD1 may act as a transcription factor that exert a negative effect on the expression of several genes that are transcribed by RNA polymerase II. The sequence is that of Nascent polypeptide-associated complex subunit beta (EGD1) from Mycosarcoma maydis (Corn smut fungus).